We begin with the raw amino-acid sequence, 245 residues long: Type III pantothenate kinase (245 aa).

6 to 13 (DVGNTAMK) provides a ligand contact to ATP. Substrate contacts are provided by residues Tyr-93 and 100–103 (GVDR). The active-site Proton acceptor is the Asp-102. Residue Asp-121 participates in K(+) binding. ATP is bound at residue Ser-124. Thr-175 is a substrate binding site.

Belongs to the type III pantothenate kinase family. In terms of assembly, homodimer. NH4(+) serves as cofactor. Requires K(+) as cofactor.

It localises to the cytoplasm. The enzyme catalyses (R)-pantothenate + ATP = (R)-4'-phosphopantothenate + ADP + H(+). It participates in cofactor biosynthesis; coenzyme A biosynthesis; CoA from (R)-pantothenate: step 1/5. Catalyzes the phosphorylation of pantothenate (Pan), the first step in CoA biosynthesis. This Alcanivorax borkumensis (strain ATCC 700651 / DSM 11573 / NCIMB 13689 / SK2) protein is Type III pantothenate kinase.